The chain runs to 445 residues: POU domain, class 3, transcription factor 2 (445 aa).

4 disordered regions span residues 63-173, 203-269, 336-361, and 411-445; these read TALS…WRSA, LGAG…TPTS, EADS…KKRT, and EKRM…TPVQ. The span at 68-90 shows a compositional bias: gly residues; it reads GGSGGGGGGGGGGGGGGGGGGDG. Positions 125–151 are enriched in low complexity; that stretch reads QQQHQQQQQQQQQQQQQQQQQQQQQQQ. Residues 217 to 226 show a composition bias toward basic and acidic residues; sequence LRDAHDEPHH. The segment covering 227 to 237 has biased composition (basic residues); that stretch reads ADHHPHPHSHP. Residues 239-253 are compositionally biased toward pro residues; it reads QQPPPPPPPQGPPGH. The region spanning 264–338 is the POU-specific domain; that stretch reads EDTPTSDDLE…LLNKWLEEAD (75 aa). At serine 343 the chain carries Phosphoserine. Positions 356–415 form a DNA-binding region, homeobox; that stretch reads KRKKRTSIEVSVKGALESHFLKCPKPSAQEITSLADSLQLEKEVVRVWFCNRRQKEKRMT.

It belongs to the POU transcription factor family. Class-3 subfamily. In terms of assembly, interacts with PQBP1. Interaction with ISL1. In terms of tissue distribution, expressed specifically at high levels in the brain.

It localises to the nucleus. Its function is as follows. Transcription factor that plays a key role in neuronal differentiation. Binds preferentially to the recognition sequence which consists of two distinct half-sites, ('GCAT') and ('TAAT'), separated by a non-conserved spacer region of 0, 2, or 3 nucleotides. Acts as a transcriptional activator when binding cooperatively with SOX4, SOX11, or SOX12 to gene promoters. The combination of three transcription factors, ASCL1, POU3F2/BRN2 and MYT1L, is sufficient to reprogram fibroblasts and other somatic cells into induced neuronal (iN) cells in vitro. Acts downstream of ASCL1, accessing chromatin that has been opened by ASCL1, and promotes transcription of neuronal genes. This Rattus norvegicus (Rat) protein is POU domain, class 3, transcription factor 2 (Pou3f2).